The sequence spans 781 residues: MAP7 domain-containing protein 2 (781 aa).

A compositionally biased stretch (gly residues) spans 1 to 32; the sequence is MERSGGNGGGGGGGGGGGGGYGGSGGGGGGAG. 4 disordered regions span residues 1–37, 50–87, 120–567, and 597–628; these read MERS…PSEG, AEAA…REER, LEEQ…AAKQ, and TRKS…ANKA. Composition is skewed to basic and acidic residues over residues 71–87 and 120–158; these read LKSD…REER and LEEQ…RSLE. Residues 73–168 adopt a coiled-coil conformation; it reads SDERQRLAKE…RTQQLELKKK (96 aa). The segment covering 192–210 has biased composition (low complexity); the sequence is LTLATSTPPLDTGTTTAAA. 2 stretches are compositionally biased toward polar residues: residues 211–245 and 257–267; these read ESTN…TVAI and LKSSYKSSPTR. Basic and acidic residues predominate over residues 318–328; it reads RRCEPPEDISK. Residues 329–348 are compositionally biased toward polar residues; that stretch reads RLSSPVKSKITSKTYPQSPK. Composition is skewed to basic and acidic residues over residues 370 to 387, 397 to 436, 453 to 567, and 597 to 613; these read ETPK…EKEG, PREE…EHSA, LAEK…AAKQ, and TRKS…DPKV.

This sequence belongs to the MAP7 family. Interacts (via N-terminus) with microtubules; facilitates microtubule stabilization. Interacts with kinesin-1 family members, KIF5A, KIF5B and KIF5C. Expressed predominantly in the glomerular layer of the olfactory bulb and Sertoli cells of the testis.

It is found in the cytoplasm. The protein localises to the cytoskeleton. Its subcellular location is the microtubule organizing center. The protein resides in the centrosome. It localises to the midbody. It is found in the cell projection. The protein localises to the neuron projection. Its subcellular location is the axon. Microtubule-stabilizing protein involved in the control of cell motility and neurite outgrowth. Acts as a critical cofactor for kinesin transport; in the proximal axon regulates kinesin-1 family members, KIF5A, KIF5B and KIF5C recruitment to microtubules and contributes to kinesin-1-mediated transport in the axons. The polypeptide is MAP7 domain-containing protein 2 (Map7d2) (Mus musculus (Mouse)).